Here is a 157-residue protein sequence, read N- to C-terminus: Regenerating islet-derived protein 4 (157 aa).

The signal sequence occupies residues 1–22 (MASKCVRLLLLLSWVAGPEVLS). The cysteines at positions 29 and 40 are disulfide-linked. The 119-residue stretch at 36-154 (YRSHCYGYFR…CTKRQHFLCK (119 aa)) folds into the C-type lectin domain. N-linked (GlcNAc...) asparagine glycans are attached at residues asparagine 49, asparagine 62, and asparagine 101. 2 disulfides stabilise this stretch: cysteine 57-cysteine 153 and cysteine 128-cysteine 145. Residues 97–101 (DPQKN) and 134–136 (KDK) contribute to the a carbohydrate site.

Its subcellular location is the secreted. Functionally, calcium-independent lectin displaying mannose-binding specificity and able to maintain carbohydrate recognition activity in an acidic environment. May be involved in inflammatory and metaplastic responses of the gastrointestinal epithelium. This Rattus norvegicus (Rat) protein is Regenerating islet-derived protein 4 (Reg4).